Consider the following 172-residue polypeptide: Translation initiation factor IF-3 (172 aa).

The protein belongs to the IF-3 family. Monomer.

It localises to the cytoplasm. In terms of biological role, IF-3 binds to the 30S ribosomal subunit and shifts the equilibrium between 70S ribosomes and their 50S and 30S subunits in favor of the free subunits, thus enhancing the availability of 30S subunits on which protein synthesis initiation begins. In Geobacillus stearothermophilus (Bacillus stearothermophilus), this protein is Translation initiation factor IF-3.